The sequence spans 450 residues: uncharacterized protein (450 aa).

A compositionally biased stretch (basic and acidic residues) spans 141-151 (WLDKTDGEKNS). Disordered stretches follow at residues 141 to 171 (WLDK…DSAG), 276 to 298 (LQDS…AVSQ), and 395 to 416 (DDED…LSRN). Residues 152 to 171 (EASSTDNSLENSTKGADSAG) are compositionally biased toward polar residues. Positions 283–298 (QGDKGEKESKDDAVSQ) are enriched in basic and acidic residues. Acidic residues predominate over residues 395 to 411 (DDEDEDNVDNSEGDEES).

This is an uncharacterized protein from Saccharomyces cerevisiae (strain ATCC 204508 / S288c) (Baker's yeast).